The sequence spans 651 residues: Choline transporter-like protein 1 (651 aa).

Over 1-25 the chain is Cytoplasmic; that stretch reads MGCCGSTQNSKRDWRPLEEHSCTDI. Residues 26–46 form a helical membrane-spanning segment; that stretch reads PWLLLFILFCVGMGFICGFSI. The Extracellular segment spans residues 47 to 208; the sequence is ATGAASRLVF…RLISGVMTSK (162 aa). N-linked (GlcNAc...) asparagine glycosylation is found at N131 and N176. The chain crosses the membrane as a helical span at residues 209 to 229; that stretch reads EIIMGLCLLSLVLSMILMVII. Topologically, residues 230–234 are cytoplasmic; the sequence is RYISR. A helical membrane pass occupies residues 235–255; the sequence is VLVWIITILVVLGSLGGTGVL. The Extracellular portion of the chain corresponds to 256–284; sequence WWLYADNKKSLNENLPPDQLQVSKDNLQA. Residues 285–305 form a helical membrane-spanning segment; that stretch reads LLVYAIAATVFTVILLLMMLI. Topologically, residues 306–311 are cytoplasmic; the sequence is MRKRVA. Residues 312-332 form a helical membrane-spanning segment; it reads LTIALFNVAGKVFIHLPLLVF. Topologically, residues 333–334 are extracellular; the sequence is QP. Residues 335 to 355 form a helical membrane-spanning segment; that stretch reads FWTFFALLLFWVYWVMVLLFL. The Cytoplasmic portion of the chain corresponds to 356–376; it reads GTAGDPFTNEQGFVEFRINGP. A helical transmembrane segment spans residues 377-397; sequence LQYMWWYHLVGLIWISEFILA. Topologically, residues 398 to 438 are extracellular; sequence CQQMTIAGAVVTYYFTRNKNDLPFTPILASVNRLIRYHLGT. The helical transmembrane segment at 439 to 459 threads the bilayer; sequence VAKGAFIITLVKIPRMILMYI. Residues 460–533 are Cytoplasmic-facing; that stretch reads HSQLKGKENA…RVAAINTVGD (74 aa). Residues 534 to 554 traverse the membrane as a helical segment; it reads FMLFLGKILIVSCTGLAGIML. The Extracellular portion of the chain corresponds to 555 to 562; sequence LNYQRDYT. The helical transmembrane segment at 563–583 threads the bilayer; the sequence is VWVLPLIIVCLFAFLVAHCFL. Residues 584–651 are Cytoplasmic-facing; the sequence is SIYEMVVDVL…KPMASGTSTA (68 aa). Residues 629 to 651 are disordered; that stretch reads LKEPGSTAEGRELKPMASGTSTA.

Belongs to the CTL (choline transporter-like) family.

The protein resides in the cell membrane. The protein localises to the mitochondrion outer membrane. It carries out the reaction choline(out) + n H(+)(in) = choline(in) + n H(+)(out). The catalysed reaction is ethanolamine(out) + n H(+)(in) = ethanolamine(in) + n H(+)(out). Functionally, choline/H+ antiporter. Also acts as a high-affinity ethanolamine/H+ antiporter, regulating the supply of extracellular ethanolamine (Etn) for the CDP-Etn pathway, redistribute intracellular Etn and balance the CDP-Cho and CDP-Etn arms of the Kennedy pathway. Involved in membrane synthesis and myelin production. This chain is Choline transporter-like protein 1 (slc44a1), found in Xenopus laevis (African clawed frog).